A 156-amino-acid polypeptide reads, in one-letter code: ATP synthase subunit b (156 aa).

Residues 11-31 (AIAFVLFVLFCMKYVWPPLMA) form a helical membrane-spanning segment.

The protein belongs to the ATPase B chain family. In terms of assembly, F-type ATPases have 2 components, F(1) - the catalytic core - and F(0) - the membrane proton channel. F(1) has five subunits: alpha(3), beta(3), gamma(1), delta(1), epsilon(1). F(0) has three main subunits: a(1), b(2) and c(10-14). The alpha and beta chains form an alternating ring which encloses part of the gamma chain. F(1) is attached to F(0) by a central stalk formed by the gamma and epsilon chains, while a peripheral stalk is formed by the delta and b chains.

The protein localises to the cell inner membrane. Its function is as follows. F(1)F(0) ATP synthase produces ATP from ADP in the presence of a proton or sodium gradient. F-type ATPases consist of two structural domains, F(1) containing the extramembraneous catalytic core and F(0) containing the membrane proton channel, linked together by a central stalk and a peripheral stalk. During catalysis, ATP synthesis in the catalytic domain of F(1) is coupled via a rotary mechanism of the central stalk subunits to proton translocation. Functionally, component of the F(0) channel, it forms part of the peripheral stalk, linking F(1) to F(0). This Sodalis glossinidius (strain morsitans) protein is ATP synthase subunit b.